A 369-amino-acid chain; its full sequence is Flagellar P-ring protein (369 aa).

The first 22 residues, 1 to 22 (MFNVRQLIATTLLLSCAFAAQA), serve as a signal peptide directing secretion.

It belongs to the FlgI family. The basal body constitutes a major portion of the flagellar organelle and consists of four rings (L,P,S, and M) mounted on a central rod.

The protein resides in the periplasm. Its subcellular location is the bacterial flagellum basal body. Its function is as follows. Assembles around the rod to form the L-ring and probably protects the motor/basal body from shearing forces during rotation. This is Flagellar P-ring protein from Pseudomonas putida (strain ATCC 47054 / DSM 6125 / CFBP 8728 / NCIMB 11950 / KT2440).